The primary structure comprises 279 residues: MKHIARKRFGQHFLTDRLIIEGIVEAIAPLPGQPMVEIGPGLAAMTRPLVERLGHLTVIELDRDLARQLRSNPQLTVIESDVLRVDFLQLAEQVQSAGALRGAASQTPSPCKLRVVGNLPYNISTPILFHLLDAVEVIEDQHFMLQKEVIDRMVAMPSTSDYGRLSVMLQWRYAMENVLYVPPQSFDPPPRVDSAIVRMVPHAEPARLDVKLLSELVRVAFSQRRKLLRHTLGQWLEQHAFSGEFDVKRRAEEVPVAEYLALAQQVQTGTAQPEKIELL.

S-adenosyl-L-methionine contacts are provided by histidine 12, leucine 14, glycine 39, glutamate 60, aspartate 81, and asparagine 118.

The protein belongs to the class I-like SAM-binding methyltransferase superfamily. rRNA adenine N(6)-methyltransferase family. RsmA subfamily.

It localises to the cytoplasm. The enzyme catalyses adenosine(1518)/adenosine(1519) in 16S rRNA + 4 S-adenosyl-L-methionine = N(6)-dimethyladenosine(1518)/N(6)-dimethyladenosine(1519) in 16S rRNA + 4 S-adenosyl-L-homocysteine + 4 H(+). In terms of biological role, specifically dimethylates two adjacent adenosines (A1518 and A1519) in the loop of a conserved hairpin near the 3'-end of 16S rRNA in the 30S particle. May play a critical role in biogenesis of 30S subunits. The sequence is that of Ribosomal RNA small subunit methyltransferase A from Polaromonas naphthalenivorans (strain CJ2).